A 40-amino-acid polypeptide reads, in one-letter code: Muscarinic m1-toxin3 (40 aa).

C3 and C24 are oxidised to a cystine.

Belongs to the three-finger toxin family. Short-chain subfamily. Aminergic toxin sub-subfamily. In terms of assembly, monomer. Post-translationally, contains 4 disulfide bonds. Expressed by the venom gland.

The protein resides in the secreted. In terms of biological role, binds irreversibly and specifically to M1 (CHRM1) muscarinic acetylcholine receptors, blocking further binding of antagonists and preventing the action of agonists. This is Muscarinic m1-toxin3 from Dendroaspis angusticeps (Eastern green mamba).